The chain runs to 241 residues: Isoprenyl transferase (241 aa).

D17 is a catalytic residue. Position 17 (D17) interacts with Mg(2+). Residues G18–R21, W22, R30, H34, and S62–E64 contribute to the substrate site. Catalysis depends on N65, which acts as the Proton acceptor. Residues W66, R68, R186, and R192–S194 contribute to the substrate site. E205 is a binding site for Mg(2+).

This sequence belongs to the UPP synthase family. As to quaternary structure, homodimer. Mg(2+) is required as a cofactor.

In terms of biological role, catalyzes the condensation of isopentenyl diphosphate (IPP) with allylic pyrophosphates generating different type of terpenoids. The protein is Isoprenyl transferase of Leptospira interrogans serogroup Icterohaemorrhagiae serovar copenhageni (strain Fiocruz L1-130).